The chain runs to 272 residues: HMP-PP phosphatase (272 aa).

Aspartate 8 serves as the catalytic Nucleophile. Mg(2+) is bound by residues aspartate 8, aspartate 10, and aspartate 212.

This sequence belongs to the HAD-like hydrolase superfamily. Cof family. Mg(2+) is required as a cofactor.

It carries out the reaction 4-amino-2-methyl-5-(diphosphooxymethyl)pyrimidine + H2O = 4-amino-2-methyl-5-(phosphooxymethyl)pyrimidine + phosphate + H(+). Its function is as follows. Catalyzes the hydrolysis of 4-amino-2-methyl-5-hydroxymethylpyrimidine pyrophosphate (HMP-PP) to 4-amino-2-methyl-5-hydroxymethylpyrimidine phosphate (HMP-P). In Shigella flexneri serotype 5b (strain 8401), this protein is HMP-PP phosphatase.